The chain runs to 499 residues: Lysine--tRNA ligase (499 aa).

Residues Glu-403 and Glu-410 each coordinate Mg(2+).

This sequence belongs to the class-II aminoacyl-tRNA synthetase family. As to quaternary structure, homodimer. Requires Mg(2+) as cofactor.

The protein resides in the cytoplasm. The catalysed reaction is tRNA(Lys) + L-lysine + ATP = L-lysyl-tRNA(Lys) + AMP + diphosphate. The sequence is that of Lysine--tRNA ligase from Campylobacter hominis (strain ATCC BAA-381 / DSM 21671 / CCUG 45161 / LMG 19568 / NCTC 13146 / CH001A).